The chain runs to 280 residues: UDP-3-O-acyl-N-acetylglucosamine deacetylase (280 aa).

His77, His238, and Asp242 together coordinate Zn(2+). The Proton donor role is filled by His265.

The protein belongs to the LpxC family. Requires Zn(2+) as cofactor.

It carries out the reaction a UDP-3-O-[(3R)-3-hydroxyacyl]-N-acetyl-alpha-D-glucosamine + H2O = a UDP-3-O-[(3R)-3-hydroxyacyl]-alpha-D-glucosamine + acetate. It participates in glycolipid biosynthesis; lipid IV(A) biosynthesis; lipid IV(A) from (3R)-3-hydroxytetradecanoyl-[acyl-carrier-protein] and UDP-N-acetyl-alpha-D-glucosamine: step 2/6. Its function is as follows. Catalyzes the hydrolysis of UDP-3-O-myristoyl-N-acetylglucosamine to form UDP-3-O-myristoylglucosamine and acetate, the committed step in lipid A biosynthesis. The sequence is that of UDP-3-O-acyl-N-acetylglucosamine deacetylase from Nostoc sp. (strain PCC 7120 / SAG 25.82 / UTEX 2576).